The chain runs to 74 residues: NAD(P)H-quinone oxidoreductase subunit O (74 aa).

It belongs to the complex I NdhO subunit family. As to quaternary structure, NDH-1 can be composed of about 15 different subunits; different subcomplexes with different compositions have been identified which probably have different functions.

The protein resides in the cellular thylakoid membrane. The catalysed reaction is a plastoquinone + NADH + (n+1) H(+)(in) = a plastoquinol + NAD(+) + n H(+)(out). The enzyme catalyses a plastoquinone + NADPH + (n+1) H(+)(in) = a plastoquinol + NADP(+) + n H(+)(out). NDH-1 shuttles electrons from an unknown electron donor, via FMN and iron-sulfur (Fe-S) centers, to quinones in the respiratory and/or the photosynthetic chain. The immediate electron acceptor for the enzyme in this species is believed to be plastoquinone. Couples the redox reaction to proton translocation, and thus conserves the redox energy in a proton gradient. Cyanobacterial NDH-1 also plays a role in inorganic carbon-concentration. The chain is NAD(P)H-quinone oxidoreductase subunit O from Synechococcus sp. (strain RCC307).